We begin with the raw amino-acid sequence, 337 residues long: Phenylalanine--tRNA ligase alpha subunit (337 aa).

Glutamate 258 is a Mg(2+) binding site.

The protein belongs to the class-II aminoacyl-tRNA synthetase family. Phe-tRNA synthetase alpha subunit type 1 subfamily. In terms of assembly, tetramer of two alpha and two beta subunits. Mg(2+) is required as a cofactor.

The protein localises to the cytoplasm. The enzyme catalyses tRNA(Phe) + L-phenylalanine + ATP = L-phenylalanyl-tRNA(Phe) + AMP + diphosphate + H(+). The chain is Phenylalanine--tRNA ligase alpha subunit from Paraburkholderia phytofirmans (strain DSM 17436 / LMG 22146 / PsJN) (Burkholderia phytofirmans).